Here is a 314-residue protein sequence, read N- to C-terminus: DNA-directed RNA polymerase subunit alpha (314 aa).

An alpha N-terminal domain (alpha-NTD) region spans residues 1 to 228; the sequence is MIEIEKPKIE…EHLNIFVGLT (228 aa). Residues 245–314 are alpha C-terminal domain (alpha-CTD); it reads KEKVLEMTIE…ELGLSLRKDD (70 aa).

Belongs to the RNA polymerase alpha chain family. As to quaternary structure, homodimer. The RNAP catalytic core consists of 2 alpha, 1 beta, 1 beta' and 1 omega subunit. When a sigma factor is associated with the core the holoenzyme is formed, which can initiate transcription.

The catalysed reaction is RNA(n) + a ribonucleoside 5'-triphosphate = RNA(n+1) + diphosphate. In terms of biological role, DNA-dependent RNA polymerase catalyzes the transcription of DNA into RNA using the four ribonucleoside triphosphates as substrates. The sequence is that of DNA-directed RNA polymerase subunit alpha from Geobacillus thermodenitrificans (strain NG80-2).